The following is a 361-amino-acid chain: Homeobox protein knotted-1-like 6 (361 aa).

A disordered region spans residues 11-48; the sequence is VGASGVHGGHQHQHHHHPWGSSLSAIVAPPPPPQLQQQ. The span at 19–28 shows a compositional bias: basic residues; sequence GHQHQHHHHP. The 21-residue stretch at 242–262 folds into the ELK domain; that stretch reads ELKHHLLKKYSGYLSSLKQEL. The segment at residues 263-326 is a DNA-binding region (homeobox; TALE-type); that stretch reads SKKKKKGKLP…NQRKRHWKPS (64 aa).

The protein belongs to the TALE/KNOX homeobox family. In terms of assembly, interacts with FTIP7. In terms of tissue distribution, expressed predominantly in shoot apices. Also found to a lesser extent in glumes.

Its subcellular location is the nucleus. It localises to the cytoplasm. In terms of biological role, transcription factor that regulates genes involved in development. May be involved in shoot formation during embryogenesis. Overexpression in transgenic plants causes altered leaf morphology. Regulates anther dehiscence via direct repression of the auxin biosynthetic gene YUCCA4. Binds to the DNA sequence 5'-TGAC-3' in the promoter of the YUCCA4 gene and represses its activity during anther development. Reduction of auxin levels at late stage of anther development, after meiosis of microspore mother cells, is necessary for normal anther dehiscence and seed setting. The protein is Homeobox protein knotted-1-like 6 (OSH1) of Oryza sativa subsp. japonica (Rice).